A 189-amino-acid polypeptide reads, in one-letter code: Ras-like protein rasC (189 aa).

Residue 11–18 (GDGGVGKS) participates in GTP binding. The Effector region motif lies at 33 to 41 (YDPTIENSY). Residues 58-62 (DTAGQ) and 117-120 (NKAD) contribute to the GTP site. Position 186 is a cysteine methyl ester (Cys186). Residue Cys186 is the site of S-geranylgeranyl cysteine attachment. Residues 187-189 (IIL) constitute a propeptide, removed in mature form.

It belongs to the small GTPase superfamily. Ras family.

The protein localises to the cell membrane. The catalysed reaction is GTP + H2O = GDP + phosphate + H(+). Its activity is regulated as follows. Alternates between an inactive form bound to GDP and an active form bound to GTP. Activated by a guanine nucleotide-exchange factor (GEF) and inactivated by a GTPase-activating protein (GAP). Its function is as follows. Ras proteins bind GDP/GTP and possess intrinsic GTPase activity. The chain is Ras-like protein rasC (rasC) from Dictyostelium discoideum (Social amoeba).